A 107-amino-acid chain; its full sequence is Histone H4 (107 aa).

Over residues 1 to 16 (MPGRGKGGKGGKGYGK) the composition is skewed to gly residues. A disordered region spans residues 1 to 23 (MPGRGKGGKGGKGYGKVGAKRHA). A DNA-binding region spans residues 17–21 (VGAKR).

It belongs to the histone H4 family. The nucleosome is a histone octamer containing two molecules each of H2A, H2B, H3 and H4 assembled in one H3-H4 heterotetramer and two H2A-H2B heterodimers. The octamer wraps approximately 147 bp of DNA.

The protein localises to the nucleus. It localises to the chromosome. Core component of nucleosome. Nucleosomes wrap and compact DNA into chromatin, limiting DNA accessibility to the cellular machineries which require DNA as a template. Histones thereby play a central role in transcription regulation, DNA repair, DNA replication and chromosomal stability. DNA accessibility is regulated via a complex set of post-translational modifications of histones, also called histone code, and nucleosome remodeling. The sequence is that of Histone H4 from Euplotes crassus.